The chain runs to 440 residues: Gamma-aminobutyric acid receptor subunit pi (440 aa).

The first 23 residues, 1 to 23, serve as a signal peptide directing secretion; sequence MSYSLYLAFVCLNLLAQRMCIQG. At 24–241 the chain is on the extracellular side; it reads NQFNVEVSRS…LVLQFELRRN (218 aa). N-linked (GlcNAc...) asparagine glycans are attached at residues asparagine 43, asparagine 102, and asparagine 145. A disulfide bridge links cysteine 160 with cysteine 174. N-linked (GlcNAc...) asparagine glycans are attached at residues asparagine 196 and asparagine 228. A helical membrane pass occupies residues 242–262; that stretch reads VLYFILETYVPSTFLVVLSWV. Topologically, residues 263–270 are cytoplasmic; sequence SFWISLES. Residues 271–290 form a helical membrane-spanning segment; it reads VPARTCIGVTTVLSMTTLMI. Residues 291–301 lie on the Extracellular side of the membrane; the sequence is GSRTSLPNTNC. A helical transmembrane segment spans residues 302–322; sequence FIKAIDVYLGICFSFVFGALL. Topologically, residues 323–419 are cytoplasmic; that stretch reads EYAVAHYSSL…NPSNVDRYSK (97 aa). Residues 420–440 traverse the membrane as a helical segment; it reads LLFPLIFMLANVFYWAYYMYF.

This sequence belongs to the ligand-gated ion channel (TC 1.A.9) family. Gamma-aminobutyric acid receptor (TC 1.A.9.5) subfamily. GABRP sub-subfamily. As to quaternary structure, heteropentamer, formed by a combination of alpha (GABRA1-6), beta (GABRB1-3), gamma (GABRG1-3), delta (GABRD), epsilon (GABRE), rho (GABRR1-3), pi (GABRP) and theta (GABRQ) chains, each subunit exhibiting distinct physiological and pharmacological properties. In terms of tissue distribution, expressed in lungs, in alveolar epithelium.

Its subcellular location is the cell membrane. The protein resides in the apical cell membrane. It carries out the reaction chloride(in) = chloride(out). In terms of biological role, pi subunit of the heteropentameric ligand-gated chloride channel gated by gamma-aminobutyric acid (GABA). GABA-gated chloride channels, also named GABA(A) receptors (GABAAR), consist of five subunits arranged around a central pore and contain GABA active binding site(s) located at the alpha and beta subunit interfaces. When activated by GABA, GABAARs selectively allow the flow of chloride anions across the cell membrane down their electrochemical gradient. Pi-containing GABAARs are mostly located in peripheral tissues. In the uterus, pi subunits modulate uterus contraction by altering the sensitivity of GABAARs to pregnanolone. In the lungs, pi-containing GABAARs contribute to pulmonary fluid transport via luminal secretion of chloride. In Rattus norvegicus (Rat), this protein is Gamma-aminobutyric acid receptor subunit pi.